Here is a 241-residue protein sequence, read N- to C-terminus: Deoxyribose-phosphate aldolase (241 aa).

The Proton donor/acceptor role is filled by aspartate 95. Lysine 159 functions as the Schiff-base intermediate with acetaldehyde in the catalytic mechanism. Lysine 188 acts as the Proton donor/acceptor in catalysis.

It belongs to the DeoC/FbaB aldolase family. DeoC type 1 subfamily.

It is found in the cytoplasm. It catalyses the reaction 2-deoxy-D-ribose 5-phosphate = D-glyceraldehyde 3-phosphate + acetaldehyde. The protein operates within carbohydrate degradation; 2-deoxy-D-ribose 1-phosphate degradation; D-glyceraldehyde 3-phosphate and acetaldehyde from 2-deoxy-alpha-D-ribose 1-phosphate: step 2/2. In terms of biological role, catalyzes a reversible aldol reaction between acetaldehyde and D-glyceraldehyde 3-phosphate to generate 2-deoxy-D-ribose 5-phosphate. The protein is Deoxyribose-phosphate aldolase of Rhodopirellula baltica (strain DSM 10527 / NCIMB 13988 / SH1).